Reading from the N-terminus, the 352-residue chain is 2'-dehydrokanamycin reductase (352 aa).

Belongs to the NAD(P)-dependent epimerase/dehydratase family.

The enzyme catalyses 2'-dehydrokanamycin A + NADPH + H(+) = kanamycin A + NADP(+). It participates in antibiotic biosynthesis; kanamycin biosynthesis. In terms of biological role, mediates the conversion of 2'-dehydrokanamycin A into kanamycin A. This chain is 2'-dehydrokanamycin reductase (kanK), found in Streptomyces kanamyceticus.